A 118-amino-acid polypeptide reads, in one-letter code: Appetite-regulating hormone (118 aa).

A signal peptide spans 1–24 (MPSTGTICSLLLLSVLLMADLAMA). A lipid anchor (O-decanoyl serine; alternate) is attached at serine 27. A lipid anchor (O-hexanoyl serine; alternate) is attached at serine 27. The O-octanoyl serine; alternate moiety is linked to residue serine 27. The segment at 29–50 (LSPEHQKVQQRKESKKPAAKLK) is disordered. The segment covering 32-44 (EHQKVQQRKESKK) has biased composition (basic and acidic residues). The propeptide at 53-76 (ALEGWLGPEDSGEVEGTEDKLEIR) is removed in mature form. Leucine 99 is subject to Leucine amide. A propeptide spans 100–118 (GKFLQDILWEEVTEAPADK) (removed in mature form).

It belongs to the motilin family. Post-translationally, O-octanoylated by GOAT/MBOAT4. O-octanoylation is essential for ghrelin activity. Amidation of Leu-99 is essential for obestatin activity.

Its subcellular location is the secreted. Ghrelin is the ligand for growth hormone secretagogue receptor type 1 (GHSR). Induces the release of growth hormone from the pituitary. Has an appetite-stimulating effect, induces adiposity and stimulates gastric acid secretion. Involved in growth regulation. In terms of biological role, obestatin may be the ligand for GPR39. May have an appetite-reducing effect resulting in decreased food intake. May reduce gastric emptying activity and jejunal motility. This is Appetite-regulating hormone (GHRL) from Sus scrofa (Pig).